The following is a 282-amino-acid chain: Pyrroline-5-carboxylate reductase (282 aa).

The protein belongs to the pyrroline-5-carboxylate reductase family.

It carries out the reaction L-proline + NADP(+) = (S)-1-pyrroline-5-carboxylate + NADPH + 2 H(+). The enzyme catalyses L-proline + NAD(+) = (S)-1-pyrroline-5-carboxylate + NADH + 2 H(+). Its pathway is amino-acid biosynthesis; L-proline biosynthesis; L-proline from L-glutamate 5-semialdehyde: step 1/1. This Schizosaccharomyces pombe (strain 972 / ATCC 24843) (Fission yeast) protein is Pyrroline-5-carboxylate reductase (pro3).